The primary structure comprises 1137 residues: Ribonucleoside-diphosphate reductase large subunit (1137 aa).

Residues 1–32 (MASRPAASSPVEARAPVGGQEAGGPSAATQGE) form a disordered region. Positions 64–84 (SYRISDNNFVQCGSNCTMIID) match the RIP homotypic interaction motif (RHIM) motif. Disordered stretches follow at residues 124–159 (GGTP…FTLG) and 173–315 (AVFG…YPVP). Polar residues predominate over residues 131–141 (AGTSTGTQTAD). Residues 196–206 (SDSDDSEDTDS) show a composition bias toward acidic residues. The segment covering 281 to 290 (AGAGLAADPA) has biased composition (low complexity). The segment covering 291-304 (VARDDAEGLSDPRP) has biased composition (basic and acidic residues). Residues T566, 581-582 (SC), G612, 791-795 (NLCTE), and 968-972 (PTAAS) contribute to the substrate site. A disulfide bond links C582 and C808. Catalysis depends on N791, which acts as the Proton acceptor. C793 (cysteine radical intermediate) is an active-site residue. Residue E795 is the Proton acceptor of the active site.

This sequence belongs to the ribonucleoside diphosphate reductase large chain family. Heterotetramer composed of a homodimer of the large subunit (R1) and a homodimer of the small subunit (R2). Larger multisubunit protein complex are also active, composed of (R1)n(R2)n. Self-assembles (via RIP homotypic interaction motif/RHIM) into homomeric fibrillar amyloid structures. Interacts (via RHIM) with human RIPK1 (via RHIM). Interacts (via RHIM) with human RIPK3 (via RHIM); the interaction leads to heteromeric amyloid assemblies. Interacts (via RHIM) with human ZBP1 (via RHIM); the interaction leads to heteromeric amyloid assemblies. Interacts (via C-terminus) with host CASP8.

It carries out the reaction a 2'-deoxyribonucleoside 5'-diphosphate + [thioredoxin]-disulfide + H2O = a ribonucleoside 5'-diphosphate + [thioredoxin]-dithiol. Ribonucleoside-diphosphate reductase holoenzyme that provides the precursors necessary for viral DNA synthesis. Allows virus growth in non-dividing cells, as well as reactivation from latency in infected hosts. Catalyzes the biosynthesis of deoxyribonucleotides from the corresponding ribonucleotides. Prevents host necroptosis by targeting host RIPK1 and RIPK3, thereby hampering the formation of necroptotic RIPK1-RIPK3 complexes. Forms hetero-amyloid structures with host proteins RIPK3 or ZBP1 which may prevent RIPK3- and ZBP1-mediated necroptosis. In addition, inhibits extrinsic apoptosis by targeting host CASP8. The polypeptide is Ribonucleoside-diphosphate reductase large subunit (Human herpesvirus 1 (strain 17) (HHV-1)).